The chain runs to 513 residues: ATP synthase subunit alpha (513 aa).

169-176 (GDRQTGKT) lines the ATP pocket.

This sequence belongs to the ATPase alpha/beta chains family. In terms of assembly, F-type ATPases have 2 components, CF(1) - the catalytic core - and CF(0) - the membrane proton channel. CF(1) has five subunits: alpha(3), beta(3), gamma(1), delta(1), epsilon(1). CF(0) has three main subunits: a(1), b(2) and c(9-12). The alpha and beta chains form an alternating ring which encloses part of the gamma chain. CF(1) is attached to CF(0) by a central stalk formed by the gamma and epsilon chains, while a peripheral stalk is formed by the delta and b chains.

Its subcellular location is the cell inner membrane. It catalyses the reaction ATP + H2O + 4 H(+)(in) = ADP + phosphate + 5 H(+)(out). Produces ATP from ADP in the presence of a proton gradient across the membrane. The alpha chain is a regulatory subunit. The chain is ATP synthase subunit alpha from Dichelobacter nodosus (strain VCS1703A).